A 459-amino-acid chain; its full sequence is Pup--protein ligase (459 aa).

Glutamate 9 contributes to the Mg(2+) binding site. Position 54 (arginine 54) interacts with ATP. Tyrosine 56 contacts Mg(2+). The active-site Proton acceptor is aspartate 58. Glutamate 64 lines the Mg(2+) pocket. ATP is bound by residues threonine 67 and tryptophan 421.

Belongs to the Pup ligase/Pup deamidase family. Pup-conjugating enzyme subfamily.

The catalysed reaction is ATP + [prokaryotic ubiquitin-like protein]-L-glutamate + [protein]-L-lysine = ADP + phosphate + N(6)-([prokaryotic ubiquitin-like protein]-gamma-L-glutamyl)-[protein]-L-lysine.. The protein operates within protein degradation; proteasomal Pup-dependent pathway. It participates in protein modification; protein pupylation. Functionally, catalyzes the covalent attachment of the prokaryotic ubiquitin-like protein modifier Pup to the proteasomal substrate proteins, thereby targeting them for proteasomal degradation. This tagging system is termed pupylation. The ligation reaction involves the side-chain carboxylate of the C-terminal glutamate of Pup and the side-chain amino group of a substrate lysine. The chain is Pup--protein ligase from Jonesia denitrificans (strain ATCC 14870 / DSM 20603 / BCRC 15368 / CIP 55.134 / JCM 11481 / NBRC 15587 / NCTC 10816 / Prevot 55134) (Listeria denitrificans).